A 1066-amino-acid chain; its full sequence is Isoleucine--tRNA ligase (1066 aa).

The 'HIGH' region signature appears at 49-59 (PYVSGAIHLGT). Positions 625-629 (KMSKS) match the 'KMSKS' region motif. Lysine 628 serves as a coordination point for ATP.

Belongs to the class-I aminoacyl-tRNA synthetase family. IleS type 2 subfamily. As to quaternary structure, monomer. Zn(2+) is required as a cofactor.

It is found in the cytoplasm. It carries out the reaction tRNA(Ile) + L-isoleucine + ATP = L-isoleucyl-tRNA(Ile) + AMP + diphosphate. Functionally, catalyzes the attachment of isoleucine to tRNA(Ile). As IleRS can inadvertently accommodate and process structurally similar amino acids such as valine, to avoid such errors it has two additional distinct tRNA(Ile)-dependent editing activities. One activity is designated as 'pretransfer' editing and involves the hydrolysis of activated Val-AMP. The other activity is designated 'posttransfer' editing and involves deacylation of mischarged Val-tRNA(Ile). This Pyrococcus furiosus (strain ATCC 43587 / DSM 3638 / JCM 8422 / Vc1) protein is Isoleucine--tRNA ligase.